Here is a 440-residue protein sequence, read N- to C-terminus: 23S rRNA (uracil(1939)-C(5))-methyltransferase RlmD (440 aa).

Positions 1-21 (MRRRTSPRRTTTSKPQPIGPI) are disordered. One can recognise a TRAM domain in the interval 15–73 (PQPIGPIQTFEVDGLTHEAKGVARLQGKVTFIEGALPGETVEAQVNKAGRRFDEAVLVN). The [4Fe-4S] cluster site is built by Cys-86, Cys-92, Cys-95, and Cys-169. 6 residues coordinate S-adenosyl-L-methionine: Gln-273, Phe-302, Asn-307, Glu-323, Asp-350, and Asp-370. Catalysis depends on Cys-396, which acts as the Nucleophile.

It belongs to the class I-like SAM-binding methyltransferase superfamily. RNA M5U methyltransferase family. RlmD subfamily.

The catalysed reaction is uridine(1939) in 23S rRNA + S-adenosyl-L-methionine = 5-methyluridine(1939) in 23S rRNA + S-adenosyl-L-homocysteine + H(+). Catalyzes the formation of 5-methyl-uridine at position 1939 (m5U1939) in 23S rRNA. The polypeptide is 23S rRNA (uracil(1939)-C(5))-methyltransferase RlmD (Marinomonas sp. (strain MWYL1)).